Consider the following 474-residue polypeptide: 3-isopropylmalate dehydratase large subunit (474 aa).

Residues Cys353, Cys414, and Cys417 each coordinate [4Fe-4S] cluster.

This sequence belongs to the aconitase/IPM isomerase family. LeuC type 1 subfamily. Heterodimer of LeuC and LeuD. It depends on [4Fe-4S] cluster as a cofactor.

It carries out the reaction (2R,3S)-3-isopropylmalate = (2S)-2-isopropylmalate. The protein operates within amino-acid biosynthesis; L-leucine biosynthesis; L-leucine from 3-methyl-2-oxobutanoate: step 2/4. Functionally, catalyzes the isomerization between 2-isopropylmalate and 3-isopropylmalate, via the formation of 2-isopropylmaleate. In Xylella fastidiosa (strain 9a5c), this protein is 3-isopropylmalate dehydratase large subunit.